The primary structure comprises 331 residues: Glucan endo-1,3-beta-glucosidase, acidic isoform GL161 (331 aa).

The N-terminal stretch at 1–9 (MCSIQIIGA) is a signal peptide. At glutamine 10 the chain carries Pyrrolidone carboxylic acid. N-linked (GlcNAc...) asparagine glycans are attached at residues asparagine 55 and asparagine 75. Residue glutamate 244 is the Nucleophile of the active site.

It belongs to the glycosyl hydrolase 17 family. Is expressed primarily in epidermal cell of healthy plant, and following induction by ethylene, accumulates in mesophyll cells.

The protein resides in the secreted. It localises to the extracellular space. The enzyme catalyses Hydrolysis of (1-&gt;3)-beta-D-glucosidic linkages in (1-&gt;3)-beta-D-glucans.. Its function is as follows. Is thought to be an important plant defense-related product against fungal pathogens. The protein is Glucan endo-1,3-beta-glucosidase, acidic isoform GL161 of Nicotiana tabacum (Common tobacco).